Here is a 397-residue protein sequence, read N- to C-terminus: Homocysteine-responsive endoplasmic reticulum-resident ubiquitin-like domain member 2 protein (397 aa).

The 80-residue stretch at 10–89 (VTLVIKAPNQ…HMVHLVCASR (80 aa)) folds into the Ubiquitin-like domain. Disordered regions lie at residues 87 to 166 (ASRS…MQGG) and 210 to 246 (APSP…PANP). Low complexity-rich tracts occupy residues 88–123 (SRSP…STPS) and 210–220 (APSPSLSAGPA). Residues 293-313 (FVMVIGAMLLVYLHQAGWFPF) form a helical membrane-spanning segment. The interval 344–373 (DEGIEDDEGDSGEEGPDDPMNPGPHQPGFL) is disordered. The span at 345-360 (EGIEDDEGDSGEEGPD) shows a compositional bias: acidic residues.

Its subcellular location is the membrane. In terms of biological role, could be involved in the unfolded protein response (UPR) pathway. This Danio rerio (Zebrafish) protein is Homocysteine-responsive endoplasmic reticulum-resident ubiquitin-like domain member 2 protein (herpud2).